We begin with the raw amino-acid sequence, 222 residues long: Glutathione S-transferase A1 (222 aa).

Position 1 is an N-acetylmethionine (Met1). Residue Ala2 is modified to N-acetylalanine; in Glutathione S-transferase A1, N-terminally processed. The 81-residue stretch at 3-83 (GKPTLHYFNG…YIATKYNLYG (81 aa)) folds into the GST N-terminal domain. Lys4 bears the N6-succinyllysine mark. Glutathione contacts are provided by residues Tyr9, Lys45, 54–55 (QV), and 67–68 (QT). The 124-residue stretch at 85–208 (DMKERALIDM…QPGSQRKPPT (124 aa)) folds into the GST C-terminal domain.

This sequence belongs to the GST superfamily. Alpha family. As to quaternary structure, homodimer or heterodimer of GSTA1 and GSTA2. In terms of tissue distribution, expressed in corpus luteum, adrenal gland, testis, liver, lung, thyroid and kidney.

It is found in the cytoplasm. The enzyme catalyses RX + glutathione = an S-substituted glutathione + a halide anion + H(+). It carries out the reaction prostaglandin A2 + glutathione = prostaglandin A2-S-(R)-glutathione. It catalyses the reaction prostaglandin J2 + glutathione = prostaglandin J2-S-(R)-glutathione. The catalysed reaction is (13S)-hydroperoxy-(9Z,11E)-octadecadienoate + 2 glutathione = (13S)-hydroxy-(9Z,11E)-octadecadienoate + glutathione disulfide + H2O. The enzyme catalyses androst-5-ene-3,17-dione = androst-4-ene-3,17-dione. Functionally, glutathione S-transferase that catalyzes the nucleophilic attack of the sulfur atom of glutathione on the electrophilic groups of a wide range of exogenous and endogenous compounds. Involved in the formation of glutathione conjugates of both prostaglandin A2 (PGA2) and prostaglandin J2 (PGJ2). It also catalyzes the isomerization of D5-androstene-3,17-dione (AD) into D4-androstene-3,17-dione and may therefore play an important role in hormone biosynthesis. Through its glutathione-dependent peroxidase activity toward the fatty acid hydroperoxide (13S)-hydroperoxy-(9Z,11E)-octadecadienoate/13-HPODE it is also involved in the metabolism of oxidized linoleic acid. The polypeptide is Glutathione S-transferase A1 (GSTA1) (Bos taurus (Bovine)).